The following is a 205-amino-acid chain: Anaerobic dimethyl sulfoxide reductase chain B (205 aa).

4Fe-4S ferredoxin-type domains lie at 5 to 33, 59 to 89, and 90 to 119; these read YGFF…LTPE, FAYY…KRED, and GFVV…YNET. [4Fe-4S] cluster is bound by residues cysteine 14, cysteine 17, cysteine 20, cysteine 24, cysteine 67, cysteine 70, cysteine 75, cysteine 79, cysteine 99, cysteine 102, cysteine 105, cysteine 109, cysteine 126, cysteine 129, cysteine 141, and cysteine 145. A disordered region spans residues 184-205; that stretch reads KPNANSRPTGDTTGYLANPKEV. Residues 186 to 195 are compositionally biased toward polar residues; the sequence is NANSRPTGDT.

Heterotrimeric enzyme composed of a catalytic heterodimer (DmsAB) and a membrane anchor protein (DmsC). The cofactor is [4Fe-4S] cluster.

Its function is as follows. Electron transfer subunit of the terminal reductase during anaerobic growth on various sulfoxide and N-oxide compounds. In Shigella flexneri, this protein is Anaerobic dimethyl sulfoxide reductase chain B (dmsB).